A 469-amino-acid chain; its full sequence is Siroheme synthase (469 aa).

Residues 1 to 203 (MDYLPIFTDL…GQEQDAKQEL (203 aa)) are precorrin-2 dehydrogenase /sirohydrochlorin ferrochelatase. NAD(+) is bound by residues 22–23 (DV) and 43–44 (PV). Phosphoserine is present on Ser-128. Residues 214–469 (GQVALIGSGP…LQQSAVVKLA (256 aa)) form a uroporphyrinogen-III C-methyltransferase region. Pro-223 is an S-adenosyl-L-methionine binding site. Asp-246 (proton acceptor) is an active-site residue. Catalysis depends on Lys-268, which acts as the Proton donor. S-adenosyl-L-methionine-binding positions include 299–301 (GGD), Val-304, 329–330 (TA), Met-381, and Gly-410.

This sequence in the N-terminal section; belongs to the precorrin-2 dehydrogenase / sirohydrochlorin ferrochelatase family. The protein in the C-terminal section; belongs to the precorrin methyltransferase family.

The catalysed reaction is uroporphyrinogen III + 2 S-adenosyl-L-methionine = precorrin-2 + 2 S-adenosyl-L-homocysteine + H(+). It carries out the reaction precorrin-2 + NAD(+) = sirohydrochlorin + NADH + 2 H(+). The enzyme catalyses siroheme + 2 H(+) = sirohydrochlorin + Fe(2+). Its pathway is cofactor biosynthesis; adenosylcobalamin biosynthesis; precorrin-2 from uroporphyrinogen III: step 1/1. The protein operates within cofactor biosynthesis; adenosylcobalamin biosynthesis; sirohydrochlorin from precorrin-2: step 1/1. It functions in the pathway porphyrin-containing compound metabolism; siroheme biosynthesis; precorrin-2 from uroporphyrinogen III: step 1/1. It participates in porphyrin-containing compound metabolism; siroheme biosynthesis; siroheme from sirohydrochlorin: step 1/1. Its pathway is porphyrin-containing compound metabolism; siroheme biosynthesis; sirohydrochlorin from precorrin-2: step 1/1. Its function is as follows. Multifunctional enzyme that catalyzes the SAM-dependent methylations of uroporphyrinogen III at position C-2 and C-7 to form precorrin-2 via precorrin-1. Then it catalyzes the NAD-dependent ring dehydrogenation of precorrin-2 to yield sirohydrochlorin. Finally, it catalyzes the ferrochelation of sirohydrochlorin to yield siroheme. The protein is Siroheme synthase of Photobacterium profundum (strain SS9).